Consider the following 3259-residue polypeptide: Striated muscle-specific serine/threonine-protein kinase (3259 aa).

The tract at residues Met-1–Gly-30 is disordered. Residue Arg-33 is modified to Omega-N-methylarginine. One can recognise an Ig-like 1 domain in the interval Pro-45 to Thr-126. Residue Ser-141 is modified to Phosphoserine. Disordered regions lie at residues Arg-155–Glu-185, Glu-198–His-226, Pro-278–Tyr-716, and Val-816–Leu-880. Residues Ser-158–Glu-185 are compositionally biased toward polar residues. Pro residues predominate over residues Pro-301–Pro-317. Ser-368 and Ser-375 each carry phosphoserine. Thr-379 carries the post-translational modification Phosphothreonine. 2 positions are modified to phosphoserine: Ser-382 and Ser-385. Over residues Ile-404 to Asp-422 the composition is skewed to basic and acidic residues. Ser-423 carries the post-translational modification Phosphoserine. At Thr-453 the chain carries Phosphothreonine. Phosphoserine occurs at positions 457, 463, 493, 511, 531, and 554. Over residues Glu-459 to Arg-473 the composition is skewed to basic and acidic residues. Basic and acidic residues predominate over residues Thr-510 to Leu-522. Basic and acidic residues-rich tracts occupy residues Pro-624–Pro-638 and Glu-663–Glu-680. Positions Pro-727–Arg-817 constitute an Ig-like 2 domain. A compositionally biased stretch (polar residues) spans Ala-820–Thr-830. Ig-like domains lie at Pro-874 to Glu-963, Pro-968 to Thr-1056, and Pro-1069 to Tyr-1157. A disulfide bridge links Cys-994 with Cys-1046. Phosphoserine is present on residues Ser-1133 and Ser-1177. Residues Arg-1162–Gly-1185 form a disordered region. The Ig-like 6 domain maps to Pro-1193–Thr-1283. The Fibronectin type-III 1 domain occupies Pro-1290–His-1387. Low complexity predominate over residues Ser-1367 to Ser-1379. A disordered region spans residues Ser-1367–Glu-1386. Positions Pro-1490–Ser-1578 constitute an Ig-like 7 domain. A Protein kinase 1 domain is found at Tyr-1606–Phe-1859. Residues Ile-1612–Leu-1620 and Lys-1635 contribute to the ATP site. Asp-1724 (proton acceptor) is an active-site residue. Disordered regions lie at residues Met-1913–Ala-2244, Ala-2336–Leu-2451, and Arg-2463–Asn-2562. Residues Pro-1918–Ser-1927 show a composition bias toward low complexity. Residues Ser-1993, Ser-2004, Ser-2019, Ser-2020, and Ser-2042 each carry the phosphoserine modification. A compositionally biased stretch (basic and acidic residues) spans Ser-2009 to Ser-2019. Asymmetric dimethylarginine; alternate is present on Arg-2060. Omega-N-methylarginine; alternate is present on Arg-2060. Positions Ala-2069 to Arg-2081 are enriched in low complexity. Residues Ser-2114 and Ser-2135 each carry the phosphoserine modification. Arg-2144 carries the omega-N-methylarginine modification. Residues Glu-2168–Gln-2179 are compositionally biased toward polar residues. Pro residues predominate over residues Pro-2180 to Pro-2189. Phosphoserine is present on residues Ser-2182 and Ser-2207. Over residues Ile-2193–Ser-2207 the composition is skewed to polar residues. Over residues Pro-2208–Glu-2218 the composition is skewed to pro residues. Positions Lys-2219 to Arg-2229 are enriched in basic and acidic residues. The segment covering Ala-2230 to Ala-2244 has biased composition (low complexity). Residues Ala-2336 to Pro-2345 are compositionally biased toward basic and acidic residues. The segment covering Leu-2346–Arg-2355 has biased composition (low complexity). Over residues Ser-2356–Ile-2372 the composition is skewed to basic and acidic residues. Ser-2376 is subject to Phosphoserine. Thr-2380 carries the post-translational modification Phosphothreonine. Residues Leu-2384–Gln-2395 show a composition bias toward basic and acidic residues. Phosphoserine occurs at positions 2410, 2414, 2438, 2439, 2444, and 2448. Residues Arg-2463 to Ser-2484 show a composition bias toward low complexity. The segment covering Gln-2510–Pro-2520 has biased composition (polar residues). 2 positions are modified to phosphoserine: Ser-2521 and Ser-2524. A compositionally biased stretch (low complexity) spans Ser-2521–Glu-2540. Basic residues predominate over residues Ser-2543–Lys-2554. Ser-2559 carries the phosphoserine modification. An Ig-like 8 domain is found at Pro-2583–Ala-2673. Residues Cys-2605 and Cys-2657 are joined by a disulfide bond. The region spanning Lys-2680–Ser-2774 is the Fibronectin type-III 2 domain. Thr-2771 is subject to Phosphothreonine. Disordered regions lie at residues Thr-2771–Asn-2829 and Thr-2855–Pro-2957. Ser-2774 is modified (phosphoserine). Positions Arg-2793 to Ala-2810 are enriched in pro residues. Positions Ser-2814–Ala-2828 are enriched in low complexity. Residues Glu-2859–Ala-2965 enclose the Fibronectin type-III 3 domain. Residues Gly-2880–Val-2907 are compositionally biased toward polar residues. The span at Pro-2910–Pro-2924 shows a compositional bias: pro residues. Over residues Ser-2940–Arg-2950 the composition is skewed to polar residues. At Ser-2941 the chain carries Phosphoserine. One can recognise a Protein kinase 2 domain in the interval Tyr-2958–Leu-3210. ATP is bound by residues Lys-2964–Val-2972 and Lys-2987. Catalysis depends on Asp-3077, which acts as the Proton acceptor.

Belongs to the protein kinase superfamily. CAMK Ser/Thr protein kinase family. In terms of assembly, interacts with MTM1. Post-translationally, may be autophosphorylated. As to expression, isoform 2 is highly expressed in differentiated arterial smooth muscle cells (ASMC) in the medial layer of the aorta. Weakly detected in brain and testis and to a lesser extent in organs rich in striated muscle or visceral smooth muscle.

The protein localises to the nucleus. The enzyme catalyses L-seryl-[protein] + ATP = O-phospho-L-seryl-[protein] + ADP + H(+). The catalysed reaction is L-threonyl-[protein] + ATP = O-phospho-L-threonyl-[protein] + ADP + H(+). Its function is as follows. Isoform 2 may have a role in regulating the growth and differentiation of arterial smooth muscle cells. The chain is Striated muscle-specific serine/threonine-protein kinase (Speg) from Rattus norvegicus (Rat).